The sequence spans 277 residues: Large ribosomal subunit protein uL2 (277 aa).

Residues 222–277 (GVAMNPVDHPHGGGEGRTSGGRHPVSPWGKPTKGKRTRSNKATDKFIMRSRHQRKK) are disordered.

Belongs to the universal ribosomal protein uL2 family. As to quaternary structure, part of the 50S ribosomal subunit. Forms a bridge to the 30S subunit in the 70S ribosome.

Functionally, one of the primary rRNA binding proteins. Required for association of the 30S and 50S subunits to form the 70S ribosome, for tRNA binding and peptide bond formation. It has been suggested to have peptidyltransferase activity; this is somewhat controversial. Makes several contacts with the 16S rRNA in the 70S ribosome. This Bartonella bacilliformis (strain ATCC 35685 / KC583 / Herrer 020/F12,63) protein is Large ribosomal subunit protein uL2.